An 893-amino-acid polypeptide reads, in one-letter code: MFGNLLTKMFGSRNDRLLKQMSKEVTKINALEPVLEALSDEELKAKTTEFKERFTQGETVEQLLVEAFAVVREASKRVFGMRHFDVQMIGGMVLNEGKIAEMRTGEGKTLTATLPSYLNALTDKGVHVITVNDYLATRDADWSRPLFEFLGLTVGCNVAGMTTQDKQAAYQSDITYGTNNEFGFDYLRDNMVFSPQERSQKPLHFAIIDEVDSILIDEARTPLIISGQAEDSSALYKIINTLVPTLEQQEEEDKEGEESTGDFTIDEKAKQVYLTERGQIHIEEIMVEKELLTAGDTLFSAANITLLHHVMAALRAHKLFQKDVDYIVKDDEIVIVDEHTGRTMEGRRWSEGLHQAVEAKEGVNIQNENQTLASITFQNYFRIYEKLSGMTGTADTEAFEFNHIYGLETVIIPTNQPMVRKDLSDLIYLTTEEKFEAILADIQDCVKRGQPVLVGTIAIETSEFLSDFLKKAKIKHKVLNAKFHQQEAEIVADAGKENAVTIATNMAGRGTDIVLGGNLDATIAKLTNPSEDDIAKAKAQWKIDHERVLELGGLHIVATERHESRRIDNQLRGRSGRQGDEGSTRFYLSMEDSLMRIFASERISNMMRKLGMEKGEAIEHPWVTRSIENAQRKVEGRNFDMRKQLLEYDDVANDQRGVIYEQRNELLDNEEIGSVVEAIRSDVINGVIDQHIPRQSLDEMWDIEGLEEQLKGEYATELTIAKWLEDDSKLHEESLREKIITEFEQAYKDKEEAVGVDVLRQFEKAVMLQSLDSHWKEHLSAMDHLRQGIGLRAHAQKNPKQEFKRESFELFTEMLDNLKYDVVGILSKVQIRAESDVEAVEEQHRKSEEVPMDFQHQSASSPSEQAQTPRVGRNEPCPCGSGKKYKQCHGKLA.

Residues Gln-87, 105–109 (GEGKT), and Asp-512 each bind ATP. Residues 840–849 (VEEQHRKSEE) show a composition bias toward basic and acidic residues. The disordered stretch occupies residues 840–893 (VEEQHRKSEEVPMDFQHQSASSPSEQAQTPRVGRNEPCPCGSGKKYKQCHGKLA). Polar residues predominate over residues 855–868 (QHQSASSPSEQAQT). Residues Cys-877, Cys-879, Cys-888, and His-889 each contribute to the Zn(2+) site. Positions 883-893 (KKYKQCHGKLA) are enriched in basic residues.

Belongs to the SecA family. As to quaternary structure, monomer and homodimer. Part of the essential Sec protein translocation apparatus which comprises SecA, SecYEG and auxiliary proteins SecDF-YajC and YidC. The cofactor is Zn(2+).

Its subcellular location is the cell inner membrane. It is found in the cytoplasm. The enzyme catalyses ATP + H2O + cellular proteinSide 1 = ADP + phosphate + cellular proteinSide 2.. Its function is as follows. Part of the Sec protein translocase complex. Interacts with the SecYEG preprotein conducting channel. Has a central role in coupling the hydrolysis of ATP to the transfer of proteins into and across the cell membrane, serving both as a receptor for the preprotein-SecB complex and as an ATP-driven molecular motor driving the stepwise translocation of polypeptide chains across the membrane. This is Protein translocase subunit SecA from Colwellia psychrerythraea (strain 34H / ATCC BAA-681) (Vibrio psychroerythus).